Consider the following 505-residue polypeptide: ATP synthase subunit alpha (505 aa).

171–178 serves as a coordination point for ATP; that stretch reads GDRQTGKT.

The protein belongs to the ATPase alpha/beta chains family. F-type ATPases have 2 components, CF(1) - the catalytic core - and CF(0) - the membrane proton channel. CF(1) has five subunits: alpha(3), beta(3), gamma(1), delta(1), epsilon(1). CF(0) has three main subunits: a(1), b(2) and c(9-12). The alpha and beta chains form an alternating ring which encloses part of the gamma chain. CF(1) is attached to CF(0) by a central stalk formed by the gamma and epsilon chains, while a peripheral stalk is formed by the delta and b chains.

Its subcellular location is the cell inner membrane. The catalysed reaction is ATP + H2O + 4 H(+)(in) = ADP + phosphate + 5 H(+)(out). Functionally, produces ATP from ADP in the presence of a proton gradient across the membrane. The alpha chain is a regulatory subunit. The sequence is that of ATP synthase subunit alpha from Aliarcobacter butzleri (strain RM4018) (Arcobacter butzleri).